The sequence spans 350 residues: Serine/threonine-protein kinase SRK2F (350 aa).

The Protein kinase domain occupies 4–260; that stretch reads YDILRDLGSG…VPEIEKHPWF (257 aa). Residues 10-18 and K33 each bind ATP; that span reads LGSGNFGVA. D123 functions as the Proton acceptor in the catalytic mechanism. The stretch at 270-303 forms a coiled coil; the sequence is EEEKCDNGVEEEEEEEEKCRQSVEEIVKIIEEAR.

It belongs to the protein kinase superfamily. Ser/Thr protein kinase family. Expressed in seedlings.

It carries out the reaction L-seryl-[protein] + ATP = O-phospho-L-seryl-[protein] + ADP + H(+). It catalyses the reaction L-threonyl-[protein] + ATP = O-phospho-L-threonyl-[protein] + ADP + H(+). This chain is Serine/threonine-protein kinase SRK2F (SRK2F), found in Arabidopsis thaliana (Mouse-ear cress).